Here is an 866-residue protein sequence, read N- to C-terminus: N-alpha-acetyltransferase 15, NatA auxiliary subunit (866 aa).

TPR repeat units lie at residues 46 to 79 (GETL…DLKS), 80 to 113 (HVCW…DKDN), 148 to 184 (RASW…SPDK), and 224 to 257 (LAVE…NPEN). Position 262 is an N6-acetyllysine (K262). Phosphoserine is present on S302. 3 TPR repeats span residues 374–407 (LWVQ…TPTL), 409–441 (ELFL…DTAD), and 485–522 (MWFQ…TDDQ). The interval 500–866 (KFGEALKKCY…AEAEELANEI (367 aa)) is interaction with HYPK. 2 positions are modified to phosphoserine: S537 and S588. A compositionally biased stretch (basic and acidic residues) spans 579 to 594 (EHEADTANMSDKELKK). Residues 579–642 (EHEADTANMS…EEIGGPKEEL (64 aa)) form a disordered region. The segment covering 595–604 (LRNKQRRAQK) has biased composition (basic residues). Over residues 606 to 621 (AQIEEEKKNAEKEKQQ) the composition is skewed to basic and acidic residues. The stretch at 672–705 (IETHLFAFEIYFRKEKFLLMLQSVKRAFAIDSSH) is one TPR 8 repeat. Residues K735 and K756 each carry the N6-acetyllysine modification. 2 positions are modified to phosphoserine: S855 and S856.

As to quaternary structure, component of the N-terminal acetyltransferase A (NatA) complex composed of NAA10 or probably NAA11 and NAA15. Interacts with XRCC6, NAA50 and XRCC5. Associates with HYPK when in a complex with NAA10. Interaction with HYPK reduces the capacity to interact with NAA50. In terms of processing, cleaved by caspases during apoptosis.

The protein resides in the cytoplasm. The protein localises to the nucleus. Auxillary subunit of the N-terminal acetyltransferase A (NatA) complex which displays alpha (N-terminal) acetyltransferase activity. The NAT activity may be important for vascular, hematopoietic and neuronal growth and development. Required to control retinal neovascularization in adult ocular endothelial cells. In complex with XRCC6 and XRCC5 (Ku80), up-regulates transcription from the osteocalcin promoter. In Pongo abelii (Sumatran orangutan), this protein is N-alpha-acetyltransferase 15, NatA auxiliary subunit (NAA15).